The following is a 398-amino-acid chain: Arginine biosynthesis bifunctional protein ArgJ (398 aa).

Residues Thr148, Lys174, Thr185, Glu271, Asn393, and Thr398 each coordinate substrate. The active-site Nucleophile is Thr185.

The protein belongs to the ArgJ family. Heterotetramer of two alpha and two beta chains.

It is found in the cytoplasm. It carries out the reaction N(2)-acetyl-L-ornithine + L-glutamate = N-acetyl-L-glutamate + L-ornithine. It catalyses the reaction L-glutamate + acetyl-CoA = N-acetyl-L-glutamate + CoA + H(+). The protein operates within amino-acid biosynthesis; L-arginine biosynthesis; L-ornithine and N-acetyl-L-glutamate from L-glutamate and N(2)-acetyl-L-ornithine (cyclic): step 1/1. Its pathway is amino-acid biosynthesis; L-arginine biosynthesis; N(2)-acetyl-L-ornithine from L-glutamate: step 1/4. Catalyzes two activities which are involved in the cyclic version of arginine biosynthesis: the synthesis of N-acetylglutamate from glutamate and acetyl-CoA as the acetyl donor, and of ornithine by transacetylation between N(2)-acetylornithine and glutamate. The protein is Arginine biosynthesis bifunctional protein ArgJ of Listeria monocytogenes serovar 1/2a (strain ATCC BAA-679 / EGD-e).